The chain runs to 280 residues: Glycoprotein G (280 aa).

An N-terminal signal peptide occupies residues Met-1–Ala-24. Residues Asn-85 and Asn-111 are each glycosylated (N-linked (GlcNAc...) asparagine; by host). Positions Glu-191 to Cys-218 are disordered.

This sequence belongs to the alphaherpesvirinae glycoprotein G family.

The polypeptide is Glycoprotein G (gG) (Psittacid herpesvirus 1 (isolate Amazon parrot/-/97-0001/1997) (PsHV-1)).